A 182-amino-acid chain; its full sequence is Ribosome maturation factor RimM (182 aa).

The PRC barrel domain occupies 102–182 (EEGDYYWKDL…TIEVDWDPGF (81 aa)).

It belongs to the RimM family. Binds ribosomal protein uS19.

Its subcellular location is the cytoplasm. In terms of biological role, an accessory protein needed during the final step in the assembly of 30S ribosomal subunit, possibly for assembly of the head region. Essential for efficient processing of 16S rRNA. May be needed both before and after RbfA during the maturation of 16S rRNA. It has affinity for free ribosomal 30S subunits but not for 70S ribosomes. The chain is Ribosome maturation factor RimM from Klebsiella pneumoniae (strain 342).